We begin with the raw amino-acid sequence, 346 residues long: MAEITAKLVKELREKSGAGVMDAKKALVEVDGDIEKAIELLREKGMAKAAKKADRIAAEGLTGIYVSGNVAAVVEVNAETDFVAKNAQFVELVNETAKVIAEGKPANNEEALALTMPSGETLEAAYVTATATIGEKISLRRFAVVEKTDAQHFGAYQHNGGRIGVVSVIEGGDEAIAKQISMHIAAMKPTVLSYSELDEQFVKDELAQLNHAIDQDNESRAMVNKPALPHLKYGSKAQLTDEVIAQAEEDIKAELAAEGKPEKIWDKIIPGKMDRFILDNTKVDQAYTLLAQVYIMDDSKTVEAYLESVNASVVEFVRFEVGEGIEKASNDFESEVAATMAAALNN.

The tract at residues 80–83 (TDFV) is involved in Mg(2+) ion dislocation from EF-Tu.

It belongs to the EF-Ts family.

It localises to the cytoplasm. Associates with the EF-Tu.GDP complex and induces the exchange of GDP to GTP. It remains bound to the aminoacyl-tRNA.EF-Tu.GTP complex up to the GTP hydrolysis stage on the ribosome. In Streptococcus thermophilus (strain CNRZ 1066), this protein is Elongation factor Ts.